We begin with the raw amino-acid sequence, 332 residues long: Zinc finger protein CONSTANS-LIKE 13 (332 aa).

Residues Cys-13, Cys-16, Cys-36, His-41, Cys-56, Cys-59, Cys-79, and His-84 each contribute to the Zn(2+) site. Residues 13–55 form a B box-type 1; atypical zinc finger; it reads CDYCDSSVALVYCKADSAKLCLACDKQVHVANQLFAKHFRSLL. Residues 56 to 96 form a B box-type 2; atypical zinc finger; sequence CDSCNESPSSLFCETERSVLCQNCDWQHHTASSSLHSRRPF. Residues 287-329 form the CCT domain; it reads RNSALSRYKEKKKSRRYEKHIRYESRKVRAESRTRIRGRFAKA.

Belongs to the CONSTANS family.

It localises to the nucleus. The polypeptide is Zinc finger protein CONSTANS-LIKE 13 (COL13) (Arabidopsis thaliana (Mouse-ear cress)).